The sequence spans 1159 residues: DNA-directed RNA polymerase subunit beta' (1159 aa).

Aspartate 398, aspartate 400, and aspartate 402 together coordinate Mg(2+). Zn(2+) is bound by residues cysteine 741, cysteine 815, cysteine 822, and cysteine 825.

This sequence belongs to the RNA polymerase beta' chain family. As to quaternary structure, the RNAP catalytic core consists of 2 alpha, 1 beta, 1 beta' and 1 omega subunit. When a sigma factor is associated with the core the holoenzyme is formed, which can initiate transcription. Requires Mg(2+) as cofactor. Zn(2+) is required as a cofactor.

It carries out the reaction RNA(n) + a ribonucleoside 5'-triphosphate = RNA(n+1) + diphosphate. Functionally, DNA-dependent RNA polymerase catalyzes the transcription of DNA into RNA using the four ribonucleoside triphosphates as substrates. The chain is DNA-directed RNA polymerase subunit beta' from Porphyromonas cangingivalis.